Here is a 348-residue protein sequence, read N- to C-terminus: Probable mitochondrial adenine nucleotide transporter BTL1 (348 aa).

3 Solcar repeats span residues 46-129 (SREA…VKRA), 157-241 (SWIS…MKTS), and 251-338 (LSRP…WKDI). 6 helical membrane passes run 52–72 (FLSG…LETI), 104–124 (GNEI…GTFE), 156–176 (ISWI…STLV), 213–233 (FYAG…CYYF), 256–276 (MLVL…PLEV), and 321–341 (VMPS…ILLA).

It belongs to the mitochondrial carrier (TC 2.A.29) family.

The protein localises to the mitochondrion inner membrane. In terms of biological role, probable mitochondrial adenylate carrier that catalyzes the transport of ATP, ADP and AMP. The chain is Probable mitochondrial adenine nucleotide transporter BTL1 from Arabidopsis thaliana (Mouse-ear cress).